The chain runs to 301 residues: MRIAILSQGPELYSTKRLVEAAQLRGHEVHVINPLECYMNINMRQSSIHIGGRELPAFDAVIPRIGASITFYGSAVLRQFEMMGVYALNDSVGISRSRDKLRSMQLMSRRGIGLPITGFANKPSDIPDLIDMVGGAPLVIKLLEGTQGIGVVLAETRKAAESVIEAFMGLKANIMVQEYIKEANGADIRCFVLGDKVIAAMKRQAMPGEFRSNLHRGGTASLVKLTPEERSVAIRAAKTMGLNVAGVDLLRSNHGPVIMEVNSSPGLEGIEGATTKDVAGAIIDFVEKNAIKVKKVTQAQG.

One can recognise an ATP-grasp domain in the interval 104–287; the sequence is MQLMSRRGIG…VAGAIIDFVE (184 aa). ATP contacts are provided by residues lysine 141, 178 to 179, aspartate 187, and 211 to 213; these read EY and RSN. 3 residues coordinate Mg(2+): aspartate 248, glutamate 260, and asparagine 262. Mn(2+) is bound by residues aspartate 248, glutamate 260, and asparagine 262.

The protein belongs to the RimK family. Mg(2+) serves as cofactor. It depends on Mn(2+) as a cofactor.

This chain is Probable alpha-L-glutamate ligase 1, found in Shewanella baltica (strain OS185).